Here is a 189-residue protein sequence, read N- to C-terminus: Potassium-transporting ATPase KdpC subunit (189 aa).

A helical transmembrane segment spans residues 6–26 (PAILMLIIFTILCGGIYPAVV).

Belongs to the KdpC family. In terms of assembly, the system is composed of three essential subunits: KdpA, KdpB and KdpC.

Its subcellular location is the cell inner membrane. Part of the high-affinity ATP-driven potassium transport (or Kdp) system, which catalyzes the hydrolysis of ATP coupled with the electrogenic transport of potassium into the cytoplasm. This subunit acts as a catalytic chaperone that increases the ATP-binding affinity of the ATP-hydrolyzing subunit KdpB by the formation of a transient KdpB/KdpC/ATP ternary complex. The polypeptide is Potassium-transporting ATPase KdpC subunit (Geobacter sulfurreducens (strain ATCC 51573 / DSM 12127 / PCA)).